Reading from the N-terminus, the 577-residue chain is Polyadenylate-binding protein, cytoplasmic and nuclear (577 aa).

Basic and acidic residues predominate over residues 1–10 (MADITDKTAE). The disordered stretch occupies residues 1–36 (MADITDKTAEQLENLNIQDDQKQAATGSESQSVENS). The residue at position 2 (Ala2) is an N-acetylalanine. Residue Lys7 forms a Glycyl lysine isopeptide (Lys-Gly) (interchain with G-Cter in ubiquitin) linkage. The tract at residues 9 to 61 (AEQLENLNIQDDQKQAATGSESQSVENSSASLYVGDLEPSVSEAHLYDIFSPI) is required and sufficient for nuclear export. Residues 11–27 (QLENLNIQDDQKQAATG) show a composition bias toward polar residues. The short motif at 12 to 17 (LENLNI) is the Nuclear export signal element. 4 RRM domains span residues 38-116 (ASLY…WSQR), 126-203 (GNIF…PHLS), 219-296 (TNLY…RAQK), and 322-399 (VNLF…IAQR). At Arg107 the chain carries Omega-N-methylarginine. Position 249 is a phosphoserine (Ser249). Residues 281-317 (DSELNGEKLYVGRAQKKNERMHVLKKQYEAYRLEKMA) form a required and sufficient for nuclear import region. The residue at position 332 (Ser332) is a Phosphoserine. A Glycyl lysine isopeptide (Lys-Gly) (interchain with G-Cter in ubiquitin) cross-link involves residue Lys337. The residue at position 405 (Ser405) is a Phosphoserine. An interaction with SUP35 region spans residues 473-577 (PPQFRNGPVY…KEQEQQTEQA (105 aa)). One can recognise a PABC domain in the interval 489–568 (GFPRNANDNN…ASAAYESFKK (80 aa)).

It belongs to the polyadenylate-binding protein type-1 family. As to quaternary structure, binds to poly(A) mRNA to form a periodic structure with a packing density of one molecule per 25 adenylate residues. Interacts with the nuclear export factor CRM1 and with the importin SXM1. Interacts with RNA15, a component of the cleavage factor IA (CFIA) complex. Interacts with translation initiation factor eIF4G (TIF4631 or TIF4632) and release factor eRF3 (SUP35). Interacts with the PAB-dependent poly(A)-nuclease (PAN) complex regulatory subunit PAN3. Interacts with ARF1, DCP1, PBP1, the Hsp70 chaperone SSA1, and TPA1. Interacts with PAT1 in an RNA-dependent manner.

It is found in the cytoplasm. It localises to the nucleus. Its function is as follows. Binds the poly(A) tail of mRNA. Appears to be an important mediator of the multiple roles of the poly(A) tail in mRNA biogenesis, stability and translation. In the nucleus, interacts with the nuclear cleavage factor IA (CFIA), which is required for both mRNA cleavage and polyadenylation. Is also required for efficient mRNA export to the cytoplasm. Acts in concert with a poly(A)-specific nuclease (PAN) to affect poly(A) tail shortening, which may occur concomitantly with either nucleocytoplasmic mRNA transport or translational initiation. Regulates PAN activity via interaction with the stimulator PAN3 or the inhibitor PBP1. In the cytoplasm, affects both translation and mRNA decay. Stimulates translation by interaction with translation initiation factor eIF4G, a subunit of the cap-binding complex eIF4F, bringing the 5'- and 3'-ends of the mRNA in proximity. The formation of this circular mRNP structure appears to be critical for the synergistic effects of the cap and the poly(A) tail in facilitating translation initiation, recycling of ribosomes, and mRNA stability. Also regulates translation termination by recruiting eukaryotic release factor 3 (eRF3). Interaction with eRF3 is also required for regulation of normal mRNA decay through translation termination-coupled poly(A) shortening, probably mediated by PAN. Loss of PAB1 from the mRNP after deadenylation triggers mRNA degradation. Inhibits the major cytoplasmic mRNA deadenylase CCR4-NOT complex. Is also associated peripherally with COPI vesicles through its interaction with ARF1, and this is required for correct localization of the asymmetrically distributed ASH1 mRNA. The chain is Polyadenylate-binding protein, cytoplasmic and nuclear (PAB1) from Saccharomyces cerevisiae (strain ATCC 204508 / S288c) (Baker's yeast).